Here is a 1024-residue protein sequence, read N- to C-terminus: Beta-galactosidase (1024 aa).

Residues N103 and D202 each coordinate substrate. D202 serves as a coordination point for Na(+). E417, H419, and E462 together coordinate Mg(2+). Substrate is bound by residues E462 and 538–541; that span reads EYAH. E462 functions as the Proton donor in the catalytic mechanism. E538 serves as the catalytic Nucleophile. N598 is a binding site for Mg(2+). Residues F602 and N605 each coordinate Na(+). Positions 605 and 1000 each coordinate substrate.

Belongs to the glycosyl hydrolase 2 family. In terms of assembly, homotetramer. Requires Mg(2+) as cofactor. Na(+) is required as a cofactor.

The enzyme catalyses Hydrolysis of terminal non-reducing beta-D-galactose residues in beta-D-galactosides.. In Escherichia coli O6:H1 (strain CFT073 / ATCC 700928 / UPEC), this protein is Beta-galactosidase.